An 80-amino-acid polypeptide reads, in one-letter code: UPF0248 protein M1425_2629 (80 aa).

It belongs to the UPF0248 family.

This is UPF0248 protein M1425_2629 from Saccharolobus islandicus (strain M.14.25 / Kamchatka #1) (Sulfolobus islandicus).